A 345-amino-acid polypeptide reads, in one-letter code: Anthranilate phosphoribosyltransferase (345 aa).

Residues G80, 83–84 (GD), T88, 90–93 (NIST), 108–116 (KHGNRSVSS), and S120 contribute to the 5-phospho-alpha-D-ribose 1-diphosphate site. Anthranilate is bound at residue G80. Mg(2+) is bound at residue S92. Residue N111 participates in anthranilate binding. R166 is a binding site for anthranilate. Positions 225 and 226 each coordinate Mg(2+).

Belongs to the anthranilate phosphoribosyltransferase family. As to quaternary structure, homodimer. Mg(2+) serves as cofactor.

It carries out the reaction N-(5-phospho-beta-D-ribosyl)anthranilate + diphosphate = 5-phospho-alpha-D-ribose 1-diphosphate + anthranilate. It functions in the pathway amino-acid biosynthesis; L-tryptophan biosynthesis; L-tryptophan from chorismate: step 2/5. In terms of biological role, catalyzes the transfer of the phosphoribosyl group of 5-phosphorylribose-1-pyrophosphate (PRPP) to anthranilate to yield N-(5'-phosphoribosyl)-anthranilate (PRA). This Pelotomaculum thermopropionicum (strain DSM 13744 / JCM 10971 / SI) protein is Anthranilate phosphoribosyltransferase.